The chain runs to 198 residues: UPF0098 protein PH1269 (198 aa).

This sequence belongs to the UPF0098 family.

This Pyrococcus horikoshii (strain ATCC 700860 / DSM 12428 / JCM 9974 / NBRC 100139 / OT-3) protein is UPF0098 protein PH1269.